The primary structure comprises 297 residues: Glucuronoxylan 4-O-methyltransferase 3 (297 aa).

Residues 9–29 form a helical membrane-spanning segment; it reads LNLKVIFIGSSILILIIIYLA. Residues 35–47 are compositionally biased toward low complexity; that stretch reads SSSSKPISKTNLS. The disordered stretch occupies residues 35–63; the sequence is SSSSKPISKTNLSQEEEETQHKQEGCPTT.

The protein belongs to the methyltransferase superfamily. As to expression, expressed in hypocotyls, roots, rosette leaves, stems and siliques.

The protein resides in the golgi apparatus membrane. The enzyme catalyses glucuronoxylan D-glucuronate + n S-adenosyl-L-methionine = glucuronoxylan 4-O-methyl-D-glucuronate + n S-adenosyl-L-homocysteine + n H(+). Functionally, methyltransferase catalyzing 4-O-methylation of glucuronic acid side chains on xylan. In Arabidopsis thaliana (Mouse-ear cress), this protein is Glucuronoxylan 4-O-methyltransferase 3 (GXM3).